A 311-amino-acid chain; its full sequence is MHLKGRSMLTLLDFAEDEIKFIVDTALQMKRENYAGRRYWGLLEGRHLALLFEKPSTRTRVAFEVAASQLGMSVSYVTKSDSQLSRGEPLKDAARVLGRYVDAIAARVKRHEDLETLVEHSGVPVINALSDKFHPTQAIADVMTILEKLGRVRGVKIAFVGDGADNVAHSLALAATSLGADVRIVTAPGYEPLDAVIAAAEERARRSGGSFELVYDPCKGVKGADVVYTDVWVSMGLEAEREKRLRDLRPYQVNSELLKCVGKDYIFMHCLPAHRGEEVTEEVLESSRSVVWDQAENKLHAQRAVLALLVP.

Residues 56–59 (STRT), Q83, R107, and 134–137 (HPTQ) each bind carbamoyl phosphate. L-ornithine contacts are provided by residues N166, D230, and 234–235 (SM). Residues 270–271 (CL) and K298 contribute to the carbamoyl phosphate site.

The protein belongs to the aspartate/ornithine carbamoyltransferase superfamily. OTCase family.

It localises to the cytoplasm. It carries out the reaction carbamoyl phosphate + L-ornithine = L-citrulline + phosphate + H(+). It participates in amino-acid degradation; L-arginine degradation via ADI pathway; carbamoyl phosphate from L-arginine: step 2/2. Functionally, reversibly catalyzes the transfer of the carbamoyl group from carbamoyl phosphate (CP) to the N(epsilon) atom of ornithine (ORN) to produce L-citrulline. This is Ornithine carbamoyltransferase from Ignicoccus hospitalis (strain KIN4/I / DSM 18386 / JCM 14125).